Reading from the N-terminus, the 691-residue chain is MARAFPLERVRNIGIAAHIDAGKTTTTERILFYSGVVHKIGEVHDGAAVTDWMAQERERGITITAAAISTSWQEHRINIIDTPGHVDFTIEVERSMRVLDGVIAVFCAVGGVQPQSETVWRQADRYSVPRMVFVNKMDRTGADFLKVYDQIKDRLKANAAPIQLPIGAEGDLSGIIDLVSNKAHIYKNDLGTDIEETEIPSDMAEKAAEWRSKLMETVAETDEELIESFLENGELTIDQLKKGIREGVLKHGLVPMLCGSAFKNKGVQLVLDAVIDYLPAPIDVPPIQGVLPSGKDDVRPSEDNAPFSALAFKVMADPYGKLTFVRMYSGVLEKGSYVLNSTKDAKERISRLVVLKADDREEVDQLRAGDLGAVLGLKNTTTGDTLCSTDDPIVLETLFVPEPVISVAVEPKTKGDMEKLSKALVSLAEEDPTFRVSTDQETNQTVIAGMGELHLEILVDRMLREFKVEANIGAPQVSYRETIRSSSKGEGKYARQTGGKGQYGHVVIEMEPGEPGSGFEFINKIVGGVVPKEYIGPASNGMKETCESGVLAGYPLIDVKVTMVDGSFHDVDSSEMAFKIAGSMAFKDGVKKCNPVLLEPMMKVEVEVPEDFLGSIIGDLSSRRGQVEGQSIDDGISKVQSKVPLAEMFGYATQLRSMTQGRGIFSMEFSKYEEVPRNVAEAIISKNQGNS.

In terms of domain architecture, tr-type G spans 8–282 (ERVRNIGIAA…AVIDYLPAPI (275 aa)). Residues 17–24 (AHIDAGKT), 81–85 (DTPGH), and 135–138 (NKMD) each bind GTP.

It belongs to the TRAFAC class translation factor GTPase superfamily. Classic translation factor GTPase family. EF-G/EF-2 subfamily.

Its subcellular location is the cytoplasm. In terms of biological role, catalyzes the GTP-dependent ribosomal translocation step during translation elongation. During this step, the ribosome changes from the pre-translocational (PRE) to the post-translocational (POST) state as the newly formed A-site-bound peptidyl-tRNA and P-site-bound deacylated tRNA move to the P and E sites, respectively. Catalyzes the coordinated movement of the two tRNA molecules, the mRNA and conformational changes in the ribosome. This is Elongation factor G from Prochlorococcus marinus (strain SARG / CCMP1375 / SS120).